The primary structure comprises 325 residues: Tagatose 1,6-diphosphate aldolase 1 (325 aa).

The protein belongs to the aldolase LacD family.

It catalyses the reaction D-tagatofuranose 1,6-bisphosphate = D-glyceraldehyde 3-phosphate + dihydroxyacetone phosphate. It participates in carbohydrate metabolism; D-tagatose 6-phosphate degradation; D-glyceraldehyde 3-phosphate and glycerone phosphate from D-tagatose 6-phosphate: step 2/2. This Streptococcus pyogenes serotype M3 (strain SSI-1) protein is Tagatose 1,6-diphosphate aldolase 1 (lacD1).